Consider the following 204-residue polypeptide: ATP-dependent Clp protease proteolytic subunit (204 aa).

Ser-100 (nucleophile) is an active-site residue. The active site involves His-125.

It belongs to the peptidase S14 family. In terms of assembly, fourteen ClpP subunits assemble into 2 heptameric rings which stack back to back to give a disk-like structure with a central cavity, resembling the structure of eukaryotic proteasomes.

The protein localises to the cytoplasm. The enzyme catalyses Hydrolysis of proteins to small peptides in the presence of ATP and magnesium. alpha-casein is the usual test substrate. In the absence of ATP, only oligopeptides shorter than five residues are hydrolyzed (such as succinyl-Leu-Tyr-|-NHMec, and Leu-Tyr-Leu-|-Tyr-Trp, in which cleavage of the -Tyr-|-Leu- and -Tyr-|-Trp bonds also occurs).. Cleaves peptides in various proteins in a process that requires ATP hydrolysis. Has a chymotrypsin-like activity. Plays a major role in the degradation of misfolded proteins. The chain is ATP-dependent Clp protease proteolytic subunit from Anaeromyxobacter sp. (strain Fw109-5).